Here is a 260-residue protein sequence, read N- to C-terminus: Adenosylcobinamide-GDP ribazoletransferase (260 aa).

The next 6 helical transmembrane spans lie at 40–60, 64–84, 117–137, 142–162, 188–208, and 209–229; these read AFPFAGIVIGFIPALALLLLL, ADPLMAALIALSIQVLVTGAL, YGAIALILSLAIRAAALAVIA, PLTAALAIPAVAALSRGAIAW, QFALASAGLVAALLIWPAFGL, and RPLVASLLATGIAGFAFTAFI.

Belongs to the CobS family. Mg(2+) is required as a cofactor.

It is found in the cell inner membrane. The enzyme catalyses alpha-ribazole + adenosylcob(III)inamide-GDP = adenosylcob(III)alamin + GMP + H(+). It catalyses the reaction alpha-ribazole 5'-phosphate + adenosylcob(III)inamide-GDP = adenosylcob(III)alamin 5'-phosphate + GMP + H(+). The protein operates within cofactor biosynthesis; adenosylcobalamin biosynthesis; adenosylcobalamin from cob(II)yrinate a,c-diamide: step 7/7. Joins adenosylcobinamide-GDP and alpha-ribazole to generate adenosylcobalamin (Ado-cobalamin). Also synthesizes adenosylcobalamin 5'-phosphate from adenosylcobinamide-GDP and alpha-ribazole 5'-phosphate. The polypeptide is Adenosylcobinamide-GDP ribazoletransferase (Rhizobium johnstonii (strain DSM 114642 / LMG 32736 / 3841) (Rhizobium leguminosarum bv. viciae)).